The chain runs to 480 residues: Adenosylmethionine-8-amino-7-oxononanoate aminotransferase (480 aa).

126 to 127 (GS) lines the pyridoxal 5'-phosphate pocket. A substrate-binding site is contributed by Tyr160. Position 270 (Asp270) interacts with pyridoxal 5'-phosphate. Lys314 is modified (N6-(pyridoxal phosphate)lysine). Gly350 provides a ligand contact to substrate. 351–352 (PT) serves as a coordination point for pyridoxal 5'-phosphate. Arg441 is a binding site for substrate.

Belongs to the class-III pyridoxal-phosphate-dependent aminotransferase family. BioA subfamily. The cofactor is pyridoxal 5'-phosphate.

The enzyme catalyses (8S)-8-amino-7-oxononanoate + S-adenosyl-L-methionine = S-adenosyl-4-methylsulfanyl-2-oxobutanoate + (7R,8S)-7,8-diammoniononanoate. Its pathway is cofactor biosynthesis; biotin biosynthesis; 7,8-diaminononanoate from 8-amino-7-oxononanoate (SAM route): step 1/1. Its function is as follows. Catalyzes the transfer of the alpha-amino group from S-adenosyl-L-methionine (SAM) to 7-keto-8-aminopelargonic acid (KAPA) to form 7,8-diaminopelargonic acid (DAPA). It is the only aminotransferase known to utilize SAM as an amino donor. The protein is Adenosylmethionine-8-amino-7-oxononanoate aminotransferase of Saccharomyces cerevisiae (strain ATCC 204508 / S288c) (Baker's yeast).